A 1115-amino-acid polypeptide reads, in one-letter code: Carbamoyl phosphate synthase large chain (1115 aa).

Positions 1–407 (MPRRTDLHHV…ALGKVMRSLE (407 aa)) are carboxyphosphate synthetic domain. Residues Arg-134, Arg-174, Gly-180, Gly-181, Glu-213, Ile-215, Glu-220, Gly-246, Val-247, His-248, Gln-290, and Glu-304 each coordinate ATP. The 196-residue stretch at 138 to 333 (KDIVAKAGGE…IAKIAAKLAI (196 aa)) folds into the ATP-grasp 1 domain. Mg(2+) contacts are provided by Gln-290, Glu-304, and Asn-306. Mn(2+) contacts are provided by Gln-290, Glu-304, and Asn-306. The tract at residues 408 to 559 (TTRAGFWTAP…ELDPAAETEV (152 aa)) is oligomerization domain. The tract at residues 560-965 (APQTERPKVL…AFAKSQTAAY (406 aa)) is carbamoyl phosphate synthetic domain. In terms of domain architecture, ATP-grasp 2 spans 693–884 (GDLLSAAGLP…LAKACARIML (192 aa)). The ATP site is built by Arg-729, Arg-768, Leu-770, Glu-775, Gly-800, Ile-801, His-802, Ser-803, Gln-843, and Glu-855. 3 residues coordinate Mg(2+): Gln-843, Glu-855, and Asn-857. Mn(2+) is bound by residues Gln-843, Glu-855, and Asn-857. Residues 966–1113 (GSLPAQGTVF…QELHRVIGGV (148 aa)) enclose the MGS-like domain. The allosteric domain stretch occupies residues 966–1115 (GSLPAQGTVF…LHRVIGGVER (150 aa)).

It belongs to the CarB family. Composed of two chains; the small (or glutamine) chain promotes the hydrolysis of glutamine to ammonia, which is used by the large (or ammonia) chain to synthesize carbamoyl phosphate. Tetramer of heterodimers (alpha,beta)4. It depends on Mg(2+) as a cofactor. Requires Mn(2+) as cofactor.

It carries out the reaction hydrogencarbonate + L-glutamine + 2 ATP + H2O = carbamoyl phosphate + L-glutamate + 2 ADP + phosphate + 2 H(+). It catalyses the reaction hydrogencarbonate + NH4(+) + 2 ATP = carbamoyl phosphate + 2 ADP + phosphate + 2 H(+). It participates in amino-acid biosynthesis; L-arginine biosynthesis; carbamoyl phosphate from bicarbonate: step 1/1. It functions in the pathway pyrimidine metabolism; UMP biosynthesis via de novo pathway; (S)-dihydroorotate from bicarbonate: step 1/3. In terms of biological role, large subunit of the glutamine-dependent carbamoyl phosphate synthetase (CPSase). CPSase catalyzes the formation of carbamoyl phosphate from the ammonia moiety of glutamine, carbonate, and phosphate donated by ATP, constituting the first step of 2 biosynthetic pathways, one leading to arginine and/or urea and the other to pyrimidine nucleotides. The large subunit (synthetase) binds the substrates ammonia (free or transferred from glutamine from the small subunit), hydrogencarbonate and ATP and carries out an ATP-coupled ligase reaction, activating hydrogencarbonate by forming carboxy phosphate which reacts with ammonia to form carbamoyl phosphate. This Mycobacterium tuberculosis (strain CDC 1551 / Oshkosh) protein is Carbamoyl phosphate synthase large chain.